A 33-amino-acid polypeptide reads, in one-letter code: Cytochrome b6-f complex subunit 8 (33 aa).

Residues 2–22 traverse the membrane as a helical segment; that stretch reads LISLGWAALAATFTFSIAMVV.

Belongs to the PetN family. In terms of assembly, the 4 large subunits of the cytochrome b6-f complex are cytochrome b6, subunit IV (17 kDa polypeptide, PetD), cytochrome f and the Rieske protein, while the 4 small subunits are PetG, PetL, PetM and PetN. The complex functions as a dimer.

It localises to the cellular thylakoid membrane. In terms of biological role, component of the cytochrome b6-f complex, which mediates electron transfer between photosystem II (PSII) and photosystem I (PSI), cyclic electron flow around PSI, and state transitions. This chain is Cytochrome b6-f complex subunit 8, found in Synechococcus sp. (strain RCC307).